The sequence spans 1318 residues: DNA-directed RNA polymerase subunit beta' (1318 aa).

Zn(2+)-binding residues include Cys60, Cys62, Cys75, and Cys78. Residues Asp535, Asp537, and Asp539 each coordinate Mg(2+). Zn(2+)-binding residues include Cys890, Cys967, Cys974, and Cys977.

This sequence belongs to the RNA polymerase beta' chain family. The RNAP catalytic core consists of 2 alpha, 1 beta, 1 beta' and 1 omega subunit. When a sigma factor is associated with the core the holoenzyme is formed, which can initiate transcription. Mg(2+) is required as a cofactor. The cofactor is Zn(2+).

It catalyses the reaction RNA(n) + a ribonucleoside 5'-triphosphate = RNA(n+1) + diphosphate. In terms of biological role, DNA-dependent RNA polymerase catalyzes the transcription of DNA into RNA using the four ribonucleoside triphosphates as substrates. This is DNA-directed RNA polymerase subunit beta' from Rhodococcus erythropolis (strain PR4 / NBRC 100887).